We begin with the raw amino-acid sequence, 430 residues long: Adenylosuccinate synthetase (430 aa).

Residues 12 to 18 (GDEGKGK) and 40 to 42 (GHT) contribute to the GTP site. D13 serves as the catalytic Proton acceptor. Mg(2+)-binding residues include D13 and G40. IMP-binding positions include 13–16 (DEGK), 38–41 (NAGH), T128, R142, Q223, T238, and R302. H41 acts as the Proton donor in catalysis. 298–304 (TTTGRPR) is a substrate binding site. Residues R304, 330–332 (CID), and 412–414 (SVG) each bind GTP.

The protein belongs to the adenylosuccinate synthetase family. Homodimer. The cofactor is Mg(2+).

It is found in the cytoplasm. It catalyses the reaction IMP + L-aspartate + GTP = N(6)-(1,2-dicarboxyethyl)-AMP + GDP + phosphate + 2 H(+). It participates in purine metabolism; AMP biosynthesis via de novo pathway; AMP from IMP: step 1/2. Functionally, plays an important role in the de novo pathway of purine nucleotide biosynthesis. Catalyzes the first committed step in the biosynthesis of AMP from IMP. In Streptococcus thermophilus (strain CNRZ 1066), this protein is Adenylosuccinate synthetase.